The primary structure comprises 90 residues: MEKLTYYQEITFNGKKQKRKKEEVIKMTGKVTKMHSTKNYDVLLENDQEIKAYISGKMSLHNIKLIPGDMVDVEISPFNLTLGRIVFRHK.

The S1-like domain maps to 15–90 (KKQKRKKEEV…TLGRIVFRHK (76 aa)).

The protein belongs to the IF-1 family. As to quaternary structure, component of the 30S ribosomal translation pre-initiation complex which assembles on the 30S ribosome in the order IF-2 and IF-3, IF-1 and N-formylmethionyl-tRNA(fMet); mRNA recruitment can occur at any time during PIC assembly.

It is found in the cytoplasm. Functionally, one of the essential components for the initiation of protein synthesis. Stabilizes the binding of IF-2 and IF-3 on the 30S subunit to which N-formylmethionyl-tRNA(fMet) subsequently binds. Helps modulate mRNA selection, yielding the 30S pre-initiation complex (PIC). Upon addition of the 50S ribosomal subunit IF-1, IF-2 and IF-3 are released leaving the mature 70S translation initiation complex. This is Translation initiation factor IF-1 from Mycoplasma sp.